The sequence spans 67 residues: Conotoxin Im3.1 (67 aa).

Positions Met-1 to Ala-20 are cleaved as a signal peptide. Positions Arg-21–Arg-52 are excised as a propeptide. Cystine bridges form between Cys-53/Cys-63, Cys-54/Cys-61, and Cys-59/Cys-64.

It belongs to the conotoxin M superfamily. As to expression, expressed by the venom duct.

It is found in the secreted. In terms of biological role, probable neurotoxin. This is Conotoxin Im3.1 from Conus imperialis (Imperial cone).